The sequence spans 154 residues: SsrA-binding protein (154 aa).

This sequence belongs to the SmpB family.

It is found in the cytoplasm. Functionally, required for rescue of stalled ribosomes mediated by trans-translation. Binds to transfer-messenger RNA (tmRNA), required for stable association of tmRNA with ribosomes. tmRNA and SmpB together mimic tRNA shape, replacing the anticodon stem-loop with SmpB. tmRNA is encoded by the ssrA gene; the 2 termini fold to resemble tRNA(Ala) and it encodes a 'tag peptide', a short internal open reading frame. During trans-translation Ala-aminoacylated tmRNA acts like a tRNA, entering the A-site of stalled ribosomes, displacing the stalled mRNA. The ribosome then switches to translate the ORF on the tmRNA; the nascent peptide is terminated with the 'tag peptide' encoded by the tmRNA and targeted for degradation. The ribosome is freed to recommence translation, which seems to be the essential function of trans-translation. The protein is SsrA-binding protein of Synechocystis sp. (strain ATCC 27184 / PCC 6803 / Kazusa).